The sequence spans 245 residues: Dehydrogenase/reductase SDR family member 6 (245 aa).

NAD(+) is bound by residues 16 to 18 (QGI), Asp-37, and Asp-58. Arg-144 lines the substrate pocket. Tyr-147 serves as the catalytic Proton acceptor. Residues Lys-151 and 180 to 184 (VDTPS) each bind NAD(+). Residues Arg-188 and Arg-205 each coordinate substrate.

Belongs to the short-chain dehydrogenases/reductases (SDR) family. As to quaternary structure, homotetramer. Detected in liver (at protein level).

Its subcellular location is the cytoplasm. It catalyses the reaction cis-4-hydroxy-L-proline + NAD(+) = 4-oxo-L-proline + NADH + H(+). The enzyme catalyses (R)-3-hydroxybutanoate + NAD(+) = acetoacetate + NADH + H(+). It participates in amino-acid metabolism. Its pathway is siderophore biosynthesis. Functionally, NAD(H)-dependent dehydrogenase/reductase with a preference for cyclic substrates. Catalyzes stereoselective conversion of 4-oxo-L-proline to cis-4-hydroxy-L-proline, likely a detoxification mechanism for ketoprolines. Mediates the formation of 2,5-dihydroxybenzoate (2,5-DHBA), a siderophore that chelates free cytoplasmic iron and associates with LCN2, thereby regulating iron transport and homeostasis while protecting cells against free radical-induced oxidative stress. The iron-siderophore complex is imported into mitochondria, providing an iron source for mitochondrial metabolic processes in particular heme synthesis. May act as a 3-hydroxybutyrate dehydrogenase. This Homo sapiens (Human) protein is Dehydrogenase/reductase SDR family member 6.